Reading from the N-terminus, the 475-residue chain is Ras-GEF domain-containing family member 1B-B (475 aa).

A compositionally biased stretch (polar residues) spans methionine 1–serine 19. Residues methionine 1–proline 25 form a disordered region. Positions arginine 36–threonine 166 constitute an N-terminal Ras-GEF domain. One can recognise a Ras-GEF domain in the interval aspartate 209 to proline 456. The interval glutamate 452–methionine 475 is disordered.

Guanine nucleotide exchange factor (GEF) for Ras family proteins. This is Ras-GEF domain-containing family member 1B-B from Danio rerio (Zebrafish).